The sequence spans 467 residues: Chromosomal replication initiator protein DnaA (467 aa).

The tract at residues 1–90 (MSLSLWQQCL…KSVTQTPQAA (90 aa)) is domain I, interacts with DnaA modulators. The domain II stretch occupies residues 91–130 (VTSNVAAPAQVAQTQPQRAAPSTRSGWDNVPAPAEPTYRS). The span at 97 to 111 (APAQVAQTQPQRAAP) shows a compositional bias: low complexity. The disordered stretch occupies residues 97–119 (APAQVAQTQPQRAAPSTRSGWDN). The tract at residues 131 to 347 (NVNVKHTFDN…GALNRVIANA (217 aa)) is domain III, AAA+ region. 4 residues coordinate ATP: Gly-175, Gly-177, Lys-178, and Thr-179. The tract at residues 348 to 467 (NFTGRAITID…FSNLIRTLSS (120 aa)) is domain IV, binds dsDNA.

Belongs to the DnaA family. In terms of assembly, oligomerizes as a right-handed, spiral filament on DNA at oriC.

It localises to the cytoplasm. Functionally, plays an essential role in the initiation and regulation of chromosomal replication. ATP-DnaA binds to the origin of replication (oriC) to initiate formation of the DNA replication initiation complex once per cell cycle. Binds the DnaA box (a 9 base pair repeat at the origin) and separates the double-stranded (ds)DNA. Forms a right-handed helical filament on oriC DNA; dsDNA binds to the exterior of the filament while single-stranded (ss)DNA is stabiized in the filament's interior. The ATP-DnaA-oriC complex binds and stabilizes one strand of the AT-rich DNA unwinding element (DUE), permitting loading of DNA polymerase. After initiation quickly degrades to an ADP-DnaA complex that is not apt for DNA replication. Binds acidic phospholipids. This chain is Chromosomal replication initiator protein DnaA, found in Escherichia coli O157:H7.